The chain runs to 140 residues: Small ribosomal subunit protein uS12 (140 aa).

Residues 33 to 55 (KEQTNVSSPQKRGVCTRVGTMTP) are disordered. Position 102 is a 3-methylthioaspartic acid (aspartate 102).

The protein belongs to the universal ribosomal protein uS12 family. Part of the 30S ribosomal subunit. Contacts proteins S8 and S17. May interact with IF1 in the 30S initiation complex.

Functionally, with S4 and S5 plays an important role in translational accuracy. In terms of biological role, interacts with and stabilizes bases of the 16S rRNA that are involved in tRNA selection in the A site and with the mRNA backbone. Located at the interface of the 30S and 50S subunits, it traverses the body of the 30S subunit contacting proteins on the other side and probably holding the rRNA structure together. The combined cluster of proteins S8, S12 and S17 appears to hold together the shoulder and platform of the 30S subunit. This is Small ribosomal subunit protein uS12 from Geobacillus thermodenitrificans (strain NG80-2).